Reading from the N-terminus, the 310-residue chain is MEWKGRDVISVRDFSKEDIEFVLKIAERLEERLNKKGHLEYARGKILATLFFEPSTRTRLSFESAMHRLGGSVIGFSSAASTSVKKGESLADTIKTVEQYSDVIVIRHPMEGAARLAAEVAEIPVINAGDGSNQHPTQTLLDLYTIKRAFGRIDGLRIGLLGDLKYGRTVHSLAEALAFYDVELYLISPELLRMPKHIVEELREKGVKVHETTDLEGTVPELDVLYVTRIQRERFPDEQEYLKVKGSYQVNCAVLKNAKESLKIMHPLPRVDEIHPEVDRTPHALYFRQVFSGVPVRMALLGLTLGVLEG.

Carbamoyl phosphate contacts are provided by Arg57 and Thr58. Lys86 contacts L-aspartate. Carbamoyl phosphate-binding residues include Arg107, His135, and Gln138. Residues Arg168 and Arg229 each coordinate L-aspartate. Carbamoyl phosphate is bound by residues Leu268 and Pro269.

It belongs to the aspartate/ornithine carbamoyltransferase superfamily. ATCase family. Heterooligomer of catalytic and regulatory chains.

It catalyses the reaction carbamoyl phosphate + L-aspartate = N-carbamoyl-L-aspartate + phosphate + H(+). The protein operates within pyrimidine metabolism; UMP biosynthesis via de novo pathway; (S)-dihydroorotate from bicarbonate: step 2/3. In terms of biological role, catalyzes the condensation of carbamoyl phosphate and aspartate to form carbamoyl aspartate and inorganic phosphate, the committed step in the de novo pyrimidine nucleotide biosynthesis pathway. The chain is Aspartate carbamoyltransferase catalytic subunit from Thermococcus onnurineus (strain NA1).